Here is a 282-residue protein sequence, read N- to C-terminus: MAHQLKLLKDDFFASDQQAVAVADRYPQDVFAEHTHDFCELVIVWRGNGLHVLNDRPYRITRGDLFYIHADDKHSYASVNDLVLQNIIYCPERLKLNLDWQGAIPGFSASAGQPHWRLGSVGMAQARQVIGQLEHESSQHVSFANEMAELLFGQLVMLLNRHRYTSDSLPPTSSETLLDKLITRLAASLKSPFALDKFCDEASCSERVLRQQFRQQTGMTINQYLRQVRVCHAQYLLQHSRLLISDISTECGFEDSNYFSVVFTRETGMTPSQWRHLNSQKD.

Residues 179-277 enclose the HTH araC/xylS-type domain; sequence DKLITRLAAS…GMTPSQWRHL (99 aa). DNA-binding regions (H-T-H motif) lie at residues 196 to 217 and 244 to 267; these read DKFC…RQQT and ISDI…TRET.

In terms of assembly, binds DNA as a dimer.

Its subcellular location is the cytoplasm. In terms of biological role, activates expression of the rhaSR operon in response to L-rhamnose. This is HTH-type transcriptional activator RhaR from Escherichia coli O139:H28 (strain E24377A / ETEC).